Here is a 145-residue protein sequence, read N- to C-terminus: Acidic phospholipase A2 (145 aa).

The signal sequence occupies residues Met-1–Ser-21. A propeptide spanning residues Ile-22 to Leu-27 is cleaved from the precursor. Cystine bridges form between Cys-38–Cys-98, Cys-54–Cys-144, Cys-56–Cys-72, Cys-71–Cys-125, Cys-78–Cys-118, Cys-87–Cys-111, and Cys-105–Cys-116. Ca(2+) contacts are provided by Tyr-55 and Gly-57. Residue His-75 is part of the active site. Asp-76 is a Ca(2+) binding site. Asp-119 is an active-site residue.

This sequence belongs to the phospholipase A2 family. Group I subfamily. D49 sub-subfamily. Requires Ca(2+) as cofactor. As to expression, expressed by the venom gland.

It is found in the secreted. The enzyme catalyses a 1,2-diacyl-sn-glycero-3-phosphocholine + H2O = a 1-acyl-sn-glycero-3-phosphocholine + a fatty acid + H(+). Functionally, PLA2 catalyzes the calcium-dependent hydrolysis of the 2-acyl groups in 3-sn-phosphoglycerides. The polypeptide is Acidic phospholipase A2 (Notechis scutatus scutatus (Mainland tiger snake)).